We begin with the raw amino-acid sequence, 613 residues long: Protein ECM3 (613 aa).

Helical transmembrane passes span 10–30 (IWASVRPIIKIYLIIGVGFGL), 74–94 (GIICLTSVILFATGLGFAFIV), 106–126 (GGILAGGMFPNISDLPIAYLQ), and 143–163 (VANVIIFLAMFLICVFNLGGF). The interval 177 to 256 (DEENTLTNDD…PAIDDRSSNS (80 aa)) is disordered. Composition is skewed to polar residues over residues 187-206 (SAQQPTQPIEGNSSSSSNQD) and 213-226 (ESTVPNSSQASYIS). Residues S291 and S338 each carry the phosphoserine modification. A disordered region spans residues 345-366 (RRRKSSISSQGAPSVLQADGTI). 4 consecutive transmembrane segments (helical) span residues 432–452 (MAVILALIIAFIPWVKALFVT), 471–491 (FIMDFTSYVGAASVPFGLILL), 546–566 (MLLFVTAITWNLPTMTTLIYF), and 587–607 (FLMLQYPLMVVSLPFLVSYFI).

The protein localises to the endoplasmic reticulum membrane. In terms of biological role, may be involved in cell wall organization and biogenesis. The protein is Protein ECM3 (ECM3) of Saccharomyces cerevisiae (strain ATCC 204508 / S288c) (Baker's yeast).